Consider the following 549-residue polypeptide: Cytoplasmic trehalase (549 aa).

Residues Arg168, 175-176 (WD), Asn212, 221-223 (RSQ), 292-294 (RDE), and Gly324 contribute to the substrate site. Active-site proton donor/acceptor residues include Asp326 and Glu509. Position 525 (Glu525) interacts with substrate.

It belongs to the glycosyl hydrolase 37 family. Monomer.

It localises to the cytoplasm. It carries out the reaction alpha,alpha-trehalose + H2O = alpha-D-glucose + beta-D-glucose. It participates in glycan degradation; trehalose degradation; D-glucose from alpha,alpha-trehalose: step 1/1. In terms of biological role, hydrolyzes trehalose to glucose. Could be involved, in cells returning to low osmolarity conditions, in the utilization of the accumulated cytoplasmic trehalose, which was synthesized in response to high osmolarity. This Salmonella arizonae (strain ATCC BAA-731 / CDC346-86 / RSK2980) protein is Cytoplasmic trehalase.